The sequence spans 392 residues: Alanine--glyoxylate aminotransferase (392 aa).

Phosphothreonine is present on Thr9. Lys209 bears the N6-(pyridoxal phosphate)lysine mark. Lys225 carries the post-translational modification N6-acetyllysine; alternate. The residue at position 225 (Lys225) is an N6-succinyllysine; alternate. Residues Lys234 and Lys312 each carry the N6-acetyllysine modification. Position 360 (Arg360) interacts with substrate.

The protein belongs to the class-V pyridoxal-phosphate-dependent aminotransferase family. In terms of assembly, homodimer. Pyridoxal 5'-phosphate is required as a cofactor. In terms of tissue distribution, liver.

The protein localises to the peroxisome. It catalyses the reaction L-serine + pyruvate = 3-hydroxypyruvate + L-alanine. The catalysed reaction is glyoxylate + L-alanine = glycine + pyruvate. With respect to regulation, alanine--glyoxylate aminotransferase activity is inhibited by 1 mM (aminooxy)acetic acid by 97.5%. Peroxisomal aminotransferase that catalyzes the transamination of glyoxylate to glycine and contributes to the glyoxylate detoxification. Also catalyzes the transamination between L-serine and pyruvate and contributes to gluconeogenesis from the L-serine metabolism. This chain is Alanine--glyoxylate aminotransferase, found in Homo sapiens (Human).